The primary structure comprises 199 residues: MKKLTEKQQKVLDFIKNYIQQNGYSPSIRDIAKHFKLTPRGAHIHVIALEKKGYITRNPKNSRSISLVKRQESILIPVKGKISAGMGIEMFEIVDEEIEIPVRMISGFGNYFALKVEGNSMIDAHIINGDYVILKKQYRIPNGQIAAVVFDNKVTLKRFYHKKDKVELVPENKDMNPIVCDAKDIKVIGKLVGIIRFYE.

The H-T-H motif DNA-binding region spans 28–47 (IRDIAKHFKLTPRGAHIHVI). Active-site for autocatalytic cleavage activity residues include S120 and K157.

Belongs to the peptidase S24 family. Homodimer.

The catalysed reaction is Hydrolysis of Ala-|-Gly bond in repressor LexA.. In terms of biological role, represses a number of genes involved in the response to DNA damage (SOS response), including recA and lexA. In the presence of single-stranded DNA, RecA interacts with LexA causing an autocatalytic cleavage which disrupts the DNA-binding part of LexA, leading to derepression of the SOS regulon and eventually DNA repair. The protein is LexA repressor of Thermosipho melanesiensis (strain DSM 12029 / CIP 104789 / BI429).